The sequence spans 389 residues: Protein RAFTIN 1A (389 aa).

A signal peptide spans 1–20 (MARFLVALLATTLVAVQAGG). A compositionally biased stretch (basic and acidic residues) spans 73 to 92 (DRPPFDYRDYSRSPPDDEPS). The interval 73-105 (DRPPFDYRDYSRSPPDDEPSKSTGAASGARDFD) is disordered. One can recognise a BURP domain in the interval 169–383 (FFHEEAVRVG…PYGHIIWAKN (215 aa)).

Specifically expressed in anthers, in the tapetum and microspores (at protein level).

Functionally, required for pollen development. Probably synthesized in the tapetum, packaged in Ubisch bodies and transported at appropriate stages to the micropsores. The chain is Protein RAFTIN 1A (RAFTIN1A) from Triticum aestivum (Wheat).